A 65-amino-acid chain; its full sequence is Sodium channel alpha-toxin Acra4 (65 aa).

The LCN-type CS-alpha/beta domain maps to 2–63; the sequence is RDGYIVDDKN…PIKDPSYKCH (62 aa). Intrachain disulfides connect Cys-12–Cys-62, Cys-16–Cys-34, Cys-20–Cys-44, and Cys-24–Cys-46. Residue Arg-65 is a propeptide, removed by a carboxypeptidase.

Belongs to the long (4 C-C) scorpion toxin superfamily. Sodium channel inhibitor family. Alpha subfamily. Expressed by the venom gland.

The protein resides in the secreted. In terms of biological role, alpha toxins bind voltage-independently at site-3 of sodium channels (Nav) and inhibit the inactivation of the activated channels, thereby blocking neuronal transmission. Electrophysiological studies of this were performed using sodium-channels expressed in F11 cell culture, by patch-clamp recordings. Affinity of this toxin toward sodium channels in F11 cell line is in the order of 1 uM concentration. This chain is Sodium channel alpha-toxin Acra4, found in Androctonus crassicauda (Arabian fat-tailed scorpion).